We begin with the raw amino-acid sequence, 249 residues long: uncharacterized protein (249 aa).

A divalent metal cation is bound by residues histidine 10, histidine 12, glutamate 95, histidine 129, histidine 150, and aspartate 198.

The protein belongs to the metallo-dependent hydrolases superfamily. TatD-type hydrolase family. Requires a divalent metal cation as cofactor.

This is an uncharacterized protein from Methanocaldococcus jannaschii (strain ATCC 43067 / DSM 2661 / JAL-1 / JCM 10045 / NBRC 100440) (Methanococcus jannaschii).